The primary structure comprises 350 residues: Arabinogalactan endo-beta-1,4-galactanase A (350 aa).

The signal sequence occupies residues methionine 1–alanine 16. A glycan (N-linked (GlcNAc...) asparagine) is linked at asparagine 128. The Proton donor role is filled by glutamate 152. Glutamate 262 acts as the Nucleophile in catalysis.

This sequence belongs to the glycosyl hydrolase 53 family.

Its subcellular location is the secreted. It catalyses the reaction The enzyme specifically hydrolyzes (1-&gt;4)-beta-D-galactosidic linkages in type I arabinogalactans.. In terms of biological role, endogalactanase involved in the degradation of plant cell wall polysaccharides, and more particularly of hairy regions of pectin. This is Arabinogalactan endo-beta-1,4-galactanase A (galA) from Aspergillus niger.